Consider the following 312-residue polypeptide: Porphobilinogen deaminase (312 aa).

C235 bears the S-(dipyrrolylmethanemethyl)cysteine mark.

This sequence belongs to the HMBS family. As to quaternary structure, monomer. Requires dipyrromethane as cofactor.

The catalysed reaction is 4 porphobilinogen + H2O = hydroxymethylbilane + 4 NH4(+). It participates in porphyrin-containing compound metabolism; protoporphyrin-IX biosynthesis; coproporphyrinogen-III from 5-aminolevulinate: step 2/4. Its function is as follows. Tetrapolymerization of the monopyrrole PBG into the hydroxymethylbilane pre-uroporphyrinogen in several discrete steps. This chain is Porphobilinogen deaminase, found in Mycolicibacterium gilvum (strain PYR-GCK) (Mycobacterium gilvum (strain PYR-GCK)).